The primary structure comprises 273 residues: Ribosomal RNA small subunit methyltransferase A (273 aa).

The S-adenosyl-L-methionine site is built by asparagine 18, leucine 20, glycine 45, glutamate 66, aspartate 91, and asparagine 113.

Belongs to the class I-like SAM-binding methyltransferase superfamily. rRNA adenine N(6)-methyltransferase family. RsmA subfamily.

The protein resides in the cytoplasm. It catalyses the reaction adenosine(1518)/adenosine(1519) in 16S rRNA + 4 S-adenosyl-L-methionine = N(6)-dimethyladenosine(1518)/N(6)-dimethyladenosine(1519) in 16S rRNA + 4 S-adenosyl-L-homocysteine + 4 H(+). Functionally, specifically dimethylates two adjacent adenosines (A1518 and A1519) in the loop of a conserved hairpin near the 3'-end of 16S rRNA in the 30S particle. May play a critical role in biogenesis of 30S subunits. This Escherichia coli O81 (strain ED1a) protein is Ribosomal RNA small subunit methyltransferase A.